The primary structure comprises 369 residues: 4-hydroxy-3-methylbut-2-en-1-yl diphosphate synthase (flavodoxin) (369 aa).

The [4Fe-4S] cluster site is built by cysteine 270, cysteine 273, cysteine 305, and glutamate 312.

It belongs to the IspG family. [4Fe-4S] cluster serves as cofactor.

It catalyses the reaction (2E)-4-hydroxy-3-methylbut-2-enyl diphosphate + oxidized [flavodoxin] + H2O + 2 H(+) = 2-C-methyl-D-erythritol 2,4-cyclic diphosphate + reduced [flavodoxin]. It functions in the pathway isoprenoid biosynthesis; isopentenyl diphosphate biosynthesis via DXP pathway; isopentenyl diphosphate from 1-deoxy-D-xylulose 5-phosphate: step 5/6. In terms of biological role, converts 2C-methyl-D-erythritol 2,4-cyclodiphosphate (ME-2,4cPP) into 1-hydroxy-2-methyl-2-(E)-butenyl 4-diphosphate. This Pseudomonas fluorescens (strain SBW25) protein is 4-hydroxy-3-methylbut-2-en-1-yl diphosphate synthase (flavodoxin).